An 83-amino-acid chain; its full sequence is Antitoxin ParD1 (83 aa).

Positions 33-60 (IRSALRLLEDRETQLRALREALEAGERS) form a coiled coil. The disordered stretch occupies residues 54–83 (LEAGERSGSSTPFDFDGFLGRKRADASRGR).

This sequence belongs to the ParD antitoxin family.

In terms of biological role, antitoxin component of a type II toxin-antitoxin (TA) system. The sequence is that of Antitoxin ParD1 (parD1) from Mycobacterium tuberculosis (strain CDC 1551 / Oshkosh).